A 1125-amino-acid polypeptide reads, in one-letter code: Transient receptor potential cation channel subfamily A member 1 (1125 aa).

Topologically, residues 1 to 721 (MKRSLRRVLR…KWCAYGFRAH (721 aa)) are cytoplasmic. 9 ANK repeats span residues 63–94 (ENLC…ALNV), 98–127 (YGNT…NPNL), 131–161 (NMMA…NINL), 165–194 (NGNT…KLCK), 198–227 (WGDY…KTGY), 239–268 (KKAS…HIDM), 272–301 (AKCM…GSSD), 309–338 (NQET…DINS), and 342–371 (EGRS…KVDI). Intrachain disulfides connect cysteine 193–cysteine 666, cysteine 463–cysteine 666, cysteine 609–cysteine 622, cysteine 622–cysteine 666, and cysteine 634–cysteine 859. 4-hydroxyproline; transient is present on proline 395. ANK repeat units lie at residues 413 to 442 (DGCT…SVHS), 446 to 475 (DKKS…DTRL), 482 to 511 (HGMT…LFLS), 514 to 543 (NGWT…KCTD), and 548 to 577 (EGNT…DILL). (E)-cinnamaldehyde-binding residues include cysteine 415 and cysteine 422. Position 622 (cysteine 622) interacts with (E)-cinnamaldehyde. Cysteine 634 carries the cysteine sulfenic acid (-SOH); transient; in hyperoxia modification. The (E)-cinnamaldehyde site is built by cysteine 642, cysteine 666, and lysine 712. A helical transmembrane segment spans residues 722 to 742 (MMNLGSYCLGLIPMTLLVVKI). The Extracellular segment spans residues 743-767 (QPGMAFNSTGIINETISTHEERINT). N-linked (GlcNAc...) asparagine glycosylation is found at asparagine 749 and asparagine 755. Residues 768 to 788 (LNSFPLKICMILVFLSSIFGY) traverse the membrane as a helical segment. Residues 789–806 (CKEVVQIFQQKRNYFLDY) are Cytoplasmic-facing. Ca(2+) is bound by residues glutamate 791, glutamine 794, asparagine 808, and glutamate 811. Residues 807-827 (NNALEWVIYTTSMIFVLPLFL) traverse the membrane as a helical segment. The Extracellular portion of the chain corresponds to 828-832 (DIPAY). A helical transmembrane segment spans residues 833–853 (MQWQCGAIAIFFYWMNFLLYL). Topologically, residues 854–876 (QRFENCGIFIVMLEVIFKTLLRS) are cytoplasmic. Cysteine 859 carries the post-translational modification Cysteine sulfenic acid (-SOH); transient; in hyperoxia. A helical membrane pass occupies residues 877 to 897 (TGVFIFLLLAFGLSFYVLLNF). At 898–904 (QDAFSTP) the chain is on the extracellular side. The segment at residues 905–925 (LLSLIQTFSMMLGDINYRDAF) is an intramembrane region (pore-forming). The Extracellular portion of the chain corresponds to 926 to 937 (LEPLFRNELAYP). A helical transmembrane segment spans residues 938–959 (VLTFGQLIAFTMFVPIVLMNLL). Over 960-1125 (IGLAVGDIAE…THCSISHPDI (166 aa)) the chain is Cytoplasmic. A coiled-coil region spans residues 1044 to 1073 (MEILKQKYRLKDLTSLLEKQHELIKLIIQK). 1048–1054 (KQKYRLK) contacts a 1,2-diacyl-sn-glycero-3-phospho-(1D-myo-inositol).

The protein belongs to the transient receptor (TC 1.A.4) family. Homotetramer. Interacts with TMEM100. Interacts with EGLN1. Interacts with the scorpion wasabi receptor toxin at the same site that electrophiles but in a non-covalent manner. Post-translationally, TRPA1 activation by electrophiles occurs though covalent modification of specific cysteine residues in the N-terminal cytoplasmic domain. Hydroxylation is required for TRPA1 activity inhibition in normoxia. In hypoxia, the decrease in oxygen concentration diminishes the activity of the hydroxylase EGLN1, thus relieving TRPA1 from inhibition and ultimately leading to channel activation. In terms of processing, oxidation of Cys-634 and Cys-859 in hyperoxia may override the hydroxylase EGLN1-mediated inhibition, causing TRPA1 activation. Specifically expressed in a subset of nociceptive neurons. Expressed in dorsal root ganglia.

The protein localises to the cell membrane. The catalysed reaction is Ca(2+)(in) = Ca(2+)(out). It catalyses the reaction Mg(2+)(in) = Mg(2+)(out). The enzyme catalyses Na(+)(in) = Na(+)(out). It carries out the reaction K(+)(in) = K(+)(out). The catalysed reaction is Zn(2+)(in) = Zn(2+)(out). Its activity is regulated as follows. Electrophilic ligands activate the channel by covalent modification of intracellular cysteines; Cys-622 plays a key role in covalent binding of electrophiles. Extracellular Ca(2+) both potentiates and inactivates TRPA1; a rapid potentiation follows by slow desensitization. Activated by increase in intracellular Ca(2+) concentration. Inhibited by ruthenium red, a potent blocker of TRPV channels and selectively by A-967079. Activated by benzyl isothiocyanate (BITC), iodoacetamide, sulfhydryl reactive agent MTSEA, N-methyl maleimide (NMM), N-ethylmaleimide (NEM), and 2-aminoethyldiphenylborinate (2-APB). Also activated by hyperoxia. Acivated by intracellular Zn(2+). TRPA1 activation may critically depend on the presence of small intracellular compounds such as polyphosphates. In terms of biological role, ligand-activated Ca(2+)-permeable, nonselective cation channel. Involved in pain detection and possibly also in cold perception, oxygen concentration perception, cough, itch, and inner ear function. Has a relatively high Ca(2+) selectivity, with a preference for divalent over monovalent cations (Ca(2+) &gt; Ba(2+) &gt; Mg(2+) &gt; NH4(+) &gt; Li(+) &gt; K(+)), the influx of cation into the cytoplasm, leads to membrane depolarization. Has a central role in the pain response to endogenous inflammatory mediators, such as bradykinin and to a diverse array of irritants. Activated by a large variety of structurally unrelated electrophilic and non-electrophilic chemical compounds, such as allylthiocyanate (AITC) from mustard oil or wasabi, cinnamaldehyde, diallyl disulfide (DADS) from garlic, and acrolein, an environmental irritant. Electrophilic ligands activate TRPA1 by interacting with critical N-terminal Cys residues in a covalent manner. Non-electrophile agonists bind at distinct sites in the transmembrane domain to promote channel activation. Also acts as an ionotropic cannabinoid receptor by being activated by delta(9)-tetrahydrocannabinol (THC), the psychoactive component of marijuana. May be a component for the mechanosensitive transduction channel of hair cells in inner ear, thereby participating in the perception of sounds. This is Transient receptor potential cation channel subfamily A member 1 from Rattus norvegicus (Rat).